The following is an 845-amino-acid chain: G-type lectin S-receptor-like serine/threonine-protein kinase At1g11410 (845 aa).

Residues Met-1–Ser-21 form the signal peptide. The Bulb-type lectin domain maps to Asp-22 to Phe-147. The Extracellular portion of the chain corresponds to Asp-22–Arg-441. 5 N-linked (GlcNAc...) asparagine glycosylation sites follow: Asn-82, Asn-103, Asn-185, Asn-231, and Asn-259. The EGF-like domain occupies Pro-283–Arg-321. Cystine bridges form between Cys-287-Cys-299 and Cys-293-Cys-309. One can recognise a PAN domain in the interval Cys-341–Asp-424. Asn-357, Asn-366, and Asn-379 each carry an N-linked (GlcNAc...) asparagine glycan. 2 disulfides stabilise this stretch: Cys-372–Cys-399 and Cys-376–Cys-382. The chain crosses the membrane as a helical span at residues Leu-442 to Cys-462. The Cytoplasmic portion of the chain corresponds to Tyr-463–Arg-845. In terms of domain architecture, Protein kinase spans Phe-523–Phe-808. ATP is bound by residues Leu-529–Val-537 and Lys-551. The tract at residues Glu-612–Ile-629 is caM-binding. The active-site Proton acceptor is Asp-648. The disordered stretch occupies residues Pro-803–Arg-845. Residues Lys-817–Arg-845 are compositionally biased toward polar residues.

Belongs to the protein kinase superfamily. Ser/Thr protein kinase family.

It localises to the cell membrane. It carries out the reaction L-seryl-[protein] + ATP = O-phospho-L-seryl-[protein] + ADP + H(+). It catalyses the reaction L-threonyl-[protein] + ATP = O-phospho-L-threonyl-[protein] + ADP + H(+). In Arabidopsis thaliana (Mouse-ear cress), this protein is G-type lectin S-receptor-like serine/threonine-protein kinase At1g11410.